Here is a 223-residue protein sequence, read N- to C-terminus: Uracil-DNA glycosylase (223 aa).

Residue Asp-67 is the Proton acceptor of the active site.

The protein belongs to the uracil-DNA glycosylase (UDG) superfamily. UNG family.

It is found in the cytoplasm. It carries out the reaction Hydrolyzes single-stranded DNA or mismatched double-stranded DNA and polynucleotides, releasing free uracil.. In terms of biological role, excises uracil residues from the DNA which can arise as a result of misincorporation of dUMP residues by DNA polymerase or due to deamination of cytosine. This Borrelia duttonii (strain Ly) protein is Uracil-DNA glycosylase.